A 417-amino-acid polypeptide reads, in one-letter code: Gamma-glutamyl phosphate reductase (417 aa).

It belongs to the gamma-glutamyl phosphate reductase family.

The protein resides in the cytoplasm. The enzyme catalyses L-glutamate 5-semialdehyde + phosphate + NADP(+) = L-glutamyl 5-phosphate + NADPH + H(+). It functions in the pathway amino-acid biosynthesis; L-proline biosynthesis; L-glutamate 5-semialdehyde from L-glutamate: step 2/2. Its function is as follows. Catalyzes the NADPH-dependent reduction of L-glutamate 5-phosphate into L-glutamate 5-semialdehyde and phosphate. The product spontaneously undergoes cyclization to form 1-pyrroline-5-carboxylate. In Erwinia tasmaniensis (strain DSM 17950 / CFBP 7177 / CIP 109463 / NCPPB 4357 / Et1/99), this protein is Gamma-glutamyl phosphate reductase.